The chain runs to 30 residues: NADH-ubiquinone oxidoreductase chain 5 (30 aa).

Residues 7-27 (NIIIIINSSLIIILFSSIFFF) form a helical membrane-spanning segment.

This sequence belongs to the complex I subunit 5 family.

Its subcellular location is the mitochondrion inner membrane. The enzyme catalyses a ubiquinone + NADH + 5 H(+)(in) = a ubiquinol + NAD(+) + 4 H(+)(out). Its function is as follows. Core subunit of the mitochondrial membrane respiratory chain NADH dehydrogenase (Complex I) that is believed to belong to the minimal assembly required for catalysis. Complex I functions in the transfer of electrons from NADH to the respiratory chain. The immediate electron acceptor for the enzyme is believed to be ubiquinone. The chain is NADH-ubiquinone oxidoreductase chain 5 (ND5) from Pisaster ochraceus (Ochre sea star).